Consider the following 167-residue polypeptide: MGITHELDIFVTNEDLALKNIELFKGNSYGCFINLKVKEEKRFNMIFVLRPDWSEIDSVKPIRMTVNNNHVDVEKVSESIHEVVYSASFLISFNSLVKVFSDDPDKYKNVYPTVTINVPKKKFKVVDQGNTYMFIQYPIDDCDKERFLKDEFKYCDNEYDQYNDCDE.

This sequence belongs to the poxviridae C7 protein family.

Plays a role for multiplication of the virus in different cell types. The sequence is that of Probable host range protein 2 from Yaba monkey tumor virus (strain VR587) (YMTV).